We begin with the raw amino-acid sequence, 279 residues long: Pantothenate synthetase (279 aa).

Residue 26–33 coordinates ATP; it reads MGNLHEGH. H33 (proton donor) is an active-site residue. Residue Q57 coordinates (R)-pantoate. Residue Q57 coordinates beta-alanine. 144–147 contributes to the ATP binding site; that stretch reads GKKD. Q150 contributes to the (R)-pantoate binding site. ATP is bound by residues V173 and 181–184; that span reads LSSR.

Belongs to the pantothenate synthetase family. Homodimer.

It is found in the cytoplasm. It catalyses the reaction (R)-pantoate + beta-alanine + ATP = (R)-pantothenate + AMP + diphosphate + H(+). The protein operates within cofactor biosynthesis; (R)-pantothenate biosynthesis; (R)-pantothenate from (R)-pantoate and beta-alanine: step 1/1. Functionally, catalyzes the condensation of pantoate with beta-alanine in an ATP-dependent reaction via a pantoyl-adenylate intermediate. The protein is Pantothenate synthetase of Burkholderia cenocepacia (strain ATCC BAA-245 / DSM 16553 / LMG 16656 / NCTC 13227 / J2315 / CF5610) (Burkholderia cepacia (strain J2315)).